A 160-amino-acid chain; its full sequence is Large ribosomal subunit protein eL21B (160 aa).

A Glycyl lysine isopeptide (Lys-Gly) (interchain with G-Cter in ubiquitin) cross-link involves residue Lys32.

The protein belongs to the eukaryotic ribosomal protein eL21 family. As to quaternary structure, component of the large ribosomal subunit (LSU). Mature yeast ribosomes consist of a small (40S) and a large (60S) subunit. The 40S small subunit contains 1 molecule of ribosomal RNA (18S rRNA) and 33 different proteins (encoded by 57 genes). The large 60S subunit contains 3 rRNA molecules (25S, 5.8S and 5S rRNA) and 46 different proteins (encoded by 81 genes).

Its subcellular location is the cytoplasm. Its function is as follows. Component of the ribosome, a large ribonucleoprotein complex responsible for the synthesis of proteins in the cell. The small ribosomal subunit (SSU) binds messenger RNAs (mRNAs) and translates the encoded message by selecting cognate aminoacyl-transfer RNA (tRNA) molecules. The large subunit (LSU) contains the ribosomal catalytic site termed the peptidyl transferase center (PTC), which catalyzes the formation of peptide bonds, thereby polymerizing the amino acids delivered by tRNAs into a polypeptide chain. The nascent polypeptides leave the ribosome through a tunnel in the LSU and interact with protein factors that function in enzymatic processing, targeting, and the membrane insertion of nascent chains at the exit of the ribosomal tunnel. This is Large ribosomal subunit protein eL21B from Saccharomyces cerevisiae (strain ATCC 204508 / S288c) (Baker's yeast).